A 170-amino-acid polypeptide reads, in one-letter code: Class I hydrophobin E (170 aa).

The first 19 residues, 1 to 19 (MQLTTLLTGLISVLSVTTA), serve as a signal peptide directing secretion. Intrachain disulfides connect Cys-62–Cys-126, Cys-70–Cys-117, Cys-71–Cys-105, and Cys-127–Cys-139.

Belongs to the fungal hydrophobin family.

The protein resides in the secreted. The protein localises to the cell wall. Aerial growth, conidiation, and dispersal of filamentous fungi in the environment rely upon a capability of their secreting small amphipathic proteins called hydrophobins (HPBs) with low sequence identity. Class I can self-assemble into an outermost layer of rodlet bundles on aerial cell surfaces, conferring cellular hydrophobicity that supports fungal growth, development and dispersal; whereas Class II form highly ordered films at water-air interfaces through intermolecular interactions but contribute nothing to the rodlet structure. In P.expansum, hydrophobins contribute to germination, tolerance to cold stress and mycotoxins patulin and citrinin production. The sequence is that of Class I hydrophobin E from Penicillium expansum (Blue mold rot fungus).